The following is a 626-amino-acid chain: MTKQEKAINLSESAQVDQQSVQPFPRSRKVYVEGSRPDIRVPMREISLDDTPTDFGGESNAPVLVYDTSGPYTDPDVIIDVRKGLPDVRSAWIEARGDTERLEGLSSDFGQQRLNDAELAKLRFAHVRNPRRAKAGANVSQMHYARQGIITAEMEYVAIRENMKLQEARAAGLLNEQHAGHSFGANIPKEITPEFVRQEIARGRAIIPANINHPEVEPMIIGRNFLVKINGNIGNSALGSSIEEEVAKLTWGIRWGSDTVMDLSTGKHIHETREWIIRNSPVPIGTVPIYQALEKVNGVAEDLTWELFRDTLIEQAEQGVDYFTIHAGVLLRYVPLTAKRVTGIVSRGGSIMAKWCLAHHKENFLYTHFDEICEIMKAYDVSFSLGDGLRPGSIADANDAAQFGELETLGELTKIAWKHDVQCMIEGPGHVPMQLIKENMDKQLECCDEAPFYTLGPLTTDIAPGYDHITSGIGAAMIGWFGCAMLCYVTPKEHLGLPNKDDVKTGIITYKIAAHAADLAKGHPGAQIRDNALSKARFEFRWEDQFNLGLDPDTARAFHDETLPKESAKVAHFCSMCGPKFCSMKITQEVREYAAKIEAVDVTVEQGMREQAERFRQEGSQLYHKV.

The segment at 1-22 (MTKQEKAINLSESAQVDQQSVQ) is disordered. Residues 10–22 (LSESAQVDQQSVQ) are compositionally biased toward polar residues. Residues Asn232, Met261, Tyr290, His326, 346–348 (SRG), 387–390 (DGLR), and Glu426 contribute to the substrate site. A Zn(2+)-binding site is contributed by His430. Residue Tyr453 participates in substrate binding. His494 lines the Zn(2+) pocket. [4Fe-4S] cluster is bound by residues Cys574, Cys577, and Cys582.

It belongs to the ThiC family. Homodimer. Requires [4Fe-4S] cluster as cofactor.

It catalyses the reaction 5-amino-1-(5-phospho-beta-D-ribosyl)imidazole + S-adenosyl-L-methionine = 4-amino-2-methyl-5-(phosphooxymethyl)pyrimidine + CO + 5'-deoxyadenosine + formate + L-methionine + 3 H(+). Its pathway is cofactor biosynthesis; thiamine diphosphate biosynthesis. Functionally, catalyzes the synthesis of the hydroxymethylpyrimidine phosphate (HMP-P) moiety of thiamine from aminoimidazole ribotide (AIR) in a radical S-adenosyl-L-methionine (SAM)-dependent reaction. In Pseudomonas putida (strain ATCC 47054 / DSM 6125 / CFBP 8728 / NCIMB 11950 / KT2440), this protein is Phosphomethylpyrimidine synthase.